Here is a 265-residue protein sequence, read N- to C-terminus: Zearalenone hydrolase (265 aa).

3 residues coordinate zearalenone: G35, S105, and S106. The active site involves S105. E129 is an active-site residue. Zearalenone is bound by residues W185, Y189, and H243. The active site involves H243.

This sequence belongs to the AB hydrolase superfamily. Hydrolase RutD family. As to quaternary structure, homodimer.

It catalyses the reaction zearalenone + H2O = hydrolyzed zearalenone + H(+). Lactonohydrolase that specifically hydrolyzes zearalenone (ZEN), an oestrogenic mycotoxin produced by numerous Fusarium specie, into a non-toxic alkylresorcinol product. This chain is Zearalenone hydrolase, found in Cladophialophora bantiana (strain ATCC 10958 / CDC1940 / 8579 / CBS 173.52) (Xylohypha bantiana).